Consider the following 319-residue polypeptide: MIDLAPLVRRLAGTPLAEWANGLQAQLDTKMSKGHGDLQRWQSALDALPALQPEKVDLTDSFTLETECDGETRTVLRKALLGLSPWRKGPFNVFGVHIDTEWRSDWKWSRVSPHLDLKGKRVLDVGCGNGYYQWRMLGAGADSVIGVDPNWLFFCQFQAMQRYLPDLPAWHLPFALEDLPANLEGFDTVFSMGVLYHRKSPIDHLLALKDCLVKGGELVMETLVIPGDVHQVLVPEDRYAQMRNVWFLPSVPALELWMRRAGFTDVRCVDVSHTTVEEQRSTEWMRFQSLGDYLDPNDHSKTVEGLPAPMRAVIVGRKP.

Carboxy-S-adenosyl-L-methionine is bound by residues Lys88, Trp102, Lys107, Gly126, 176 to 177, Met192, Tyr196, and Arg311; that span reads LE.

It belongs to the class I-like SAM-binding methyltransferase superfamily. CmoB family. Homotetramer.

It carries out the reaction carboxy-S-adenosyl-L-methionine + 5-hydroxyuridine(34) in tRNA = 5-carboxymethoxyuridine(34) in tRNA + S-adenosyl-L-homocysteine + H(+). Functionally, catalyzes carboxymethyl transfer from carboxy-S-adenosyl-L-methionine (Cx-SAM) to 5-hydroxyuridine (ho5U) to form 5-carboxymethoxyuridine (cmo5U) at position 34 in tRNAs. The protein is tRNA U34 carboxymethyltransferase of Pseudomonas syringae pv. tomato (strain ATCC BAA-871 / DC3000).